Consider the following 542-residue polypeptide: Chromatin structure-remodeling complex subunit rsc4 (542 aa).

One can recognise a Bromo 1 domain in the interval 6–116 (HNAPFDKTKF…NTANSLESKD (111 aa)). 2 disordered regions span residues 114–139 (SKDG…KPGT) and 246–327 (ISSF…PIPE). Residues 119–128 (LNEEENEEME) are compositionally biased toward acidic residues. A Bromo 2 domain is found at 139–249 (TNEIDVPKVI…QLSSSLISSF (111 aa)). Residues 252–266 (QPKEHSPATSKHEPE) show a composition bias toward basic and acidic residues. A phosphoserine mark is found at serine 257, serine 271, serine 287, and serine 313. Over residues 268–280 (TPASPTPSVSAST) the composition is skewed to low complexity. The span at 286–298 (TSVAPSFITSDQA) shows a compositional bias: polar residues. Residues 304–322 (LKSEEAHVESFSKESEKDQ) are compositionally biased toward basic and acidic residues.

As to quaternary structure, component of the RSC complex composed of at least arp9, arp42, rsc1, rsc4, rsc7, rsc9, rsc58, sfh1, snf21, ssr1, ssr2, ssr3 and ssr4. The complex interacts with histone and histone variant components of centromeric chromatin.

It is found in the nucleus. Functionally, component of the chromatin structure remodeling complex (RSC), which is involved in transcription regulation and nucleosome positioning. Controls particularly membrane and organelle development genes. In Schizosaccharomyces pombe (strain 972 / ATCC 24843) (Fission yeast), this protein is Chromatin structure-remodeling complex subunit rsc4 (rsc4).